The chain runs to 372 residues: Bifunctional enzyme IspD/IspF (372 aa).

The segment at 1 to 210 (MLDLSLIMLG…LNLNSPSNDI (210 aa)) is 2-C-methyl-D-erythritol 4-phosphate cytidylyltransferase. The 2-C-methyl-D-erythritol 2,4-cyclodiphosphate synthase stretch occupies residues 211-372 (FCGNGFDVHA…LKYFNWRNVL (162 aa)). Aspartate 217 and histidine 219 together coordinate a divalent metal cation. Residues 217–219 (DVH) and 243–244 (HS) each bind 4-CDP-2-C-methyl-D-erythritol 2-phosphate. Histidine 251 lines the a divalent metal cation pocket. 4-CDP-2-C-methyl-D-erythritol 2-phosphate is bound by residues 265-267 (DIG), 270-274 (YPDND), 341-344 (TTTE), phenylalanine 348, and arginine 351.

In the N-terminal section; belongs to the IspD/TarI cytidylyltransferase family. IspD subfamily. This sequence in the C-terminal section; belongs to the IspF family. It depends on a divalent metal cation as a cofactor.

It catalyses the reaction 2-C-methyl-D-erythritol 4-phosphate + CTP + H(+) = 4-CDP-2-C-methyl-D-erythritol + diphosphate. The catalysed reaction is 4-CDP-2-C-methyl-D-erythritol 2-phosphate = 2-C-methyl-D-erythritol 2,4-cyclic diphosphate + CMP. Its pathway is isoprenoid biosynthesis; isopentenyl diphosphate biosynthesis via DXP pathway; isopentenyl diphosphate from 1-deoxy-D-xylulose 5-phosphate: step 2/6. The protein operates within isoprenoid biosynthesis; isopentenyl diphosphate biosynthesis via DXP pathway; isopentenyl diphosphate from 1-deoxy-D-xylulose 5-phosphate: step 4/6. In terms of biological role, bifunctional enzyme that catalyzes the formation of 4-diphosphocytidyl-2-C-methyl-D-erythritol from CTP and 2-C-methyl-D-erythritol 4-phosphate (MEP) (IspD), and catalyzes the conversion of 4-diphosphocytidyl-2-C-methyl-D-erythritol 2-phosphate (CDP-ME2P) to 2-C-methyl-D-erythritol 2,4-cyclodiphosphate (ME-CPP) with a corresponding release of cytidine 5-monophosphate (CMP) (IspF). This Campylobacter fetus subsp. fetus (strain 82-40) protein is Bifunctional enzyme IspD/IspF.